The sequence spans 184 residues: Ribosome-recycling factor (184 aa).

Residues 133–153 form a disordered region; sequence DSNDELKKQQKNSDITEDDLR.

The protein belongs to the RRF family.

It localises to the cytoplasm. Responsible for the release of ribosomes from messenger RNA at the termination of protein biosynthesis. May increase the efficiency of translation by recycling ribosomes from one round of translation to another. This Staphylococcus saprophyticus subsp. saprophyticus (strain ATCC 15305 / DSM 20229 / NCIMB 8711 / NCTC 7292 / S-41) protein is Ribosome-recycling factor.